The sequence spans 167 residues: Endoribonuclease YbeY (167 aa).

The segment at Gly64–Gly101 is disordered. The segment covering Glu90–Pro99 has biased composition (acidic residues). His131, His135, and His141 together coordinate Zn(2+).

Belongs to the endoribonuclease YbeY family. It depends on Zn(2+) as a cofactor.

Its subcellular location is the cytoplasm. Its function is as follows. Single strand-specific metallo-endoribonuclease involved in late-stage 70S ribosome quality control and in maturation of the 3' terminus of the 16S rRNA. This is Endoribonuclease YbeY from Cereibacter sphaeroides (strain ATCC 17023 / DSM 158 / JCM 6121 / CCUG 31486 / LMG 2827 / NBRC 12203 / NCIMB 8253 / ATH 2.4.1.) (Rhodobacter sphaeroides).